A 442-amino-acid polypeptide reads, in one-letter code: Glutamate--tRNA ligase 1 (442 aa).

Positions 9-19 (PSPTGKLHVGN) match the 'HIGH' region motif. Residues 240 to 244 (KLSKR) carry the 'KMSKS' region motif. ATP is bound at residue K243.

The protein belongs to the class-I aminoacyl-tRNA synthetase family. Glutamate--tRNA ligase type 1 subfamily. In terms of assembly, monomer.

Its subcellular location is the cytoplasm. The enzyme catalyses tRNA(Glu) + L-glutamate + ATP = L-glutamyl-tRNA(Glu) + AMP + diphosphate. Its function is as follows. Catalyzes the attachment of glutamate to tRNA(Glu) in a two-step reaction: glutamate is first activated by ATP to form Glu-AMP and then transferred to the acceptor end of tRNA(Glu). The chain is Glutamate--tRNA ligase 1 from Novosphingobium aromaticivorans (strain ATCC 700278 / DSM 12444 / CCUG 56034 / CIP 105152 / NBRC 16084 / F199).